The following is a 366-amino-acid chain: Peptide chain release factor 2 (366 aa).

Glutamine 249 bears the N5-methylglutamine mark.

The protein belongs to the prokaryotic/mitochondrial release factor family. In terms of processing, methylated by PrmC. Methylation increases the termination efficiency of RF2.

It is found in the cytoplasm. In terms of biological role, peptide chain release factor 2 directs the termination of translation in response to the peptide chain termination codons UGA and UAA. This chain is Peptide chain release factor 2, found in Petrotoga mobilis (strain DSM 10674 / SJ95).